A 343-amino-acid chain; its full sequence is MTITPQEALQRTIEHREIFHDEMLHLMRLIMRGDMSPVMAAAIITGLRVKKETIGEIAAAATVMREFANHVEVQDNSNFVDIVGTGGDGSHTFNISTASMFIAAAAGAKVAKHGNRGVSSKSGSADVLDALGVNIDLQPDQVAASIAETGMGFMFAPNHHPAMKNIAAVRRELGVRTIFNILGPLTNPAGAPNQLMGVFHPDLVGIQVRVMQRLGAQHVLVVYGKDGMDEVSLGAATLVGELRDGQVHEYEIHPEDFGLQMVSNRTLKVENAEESRTMLLGALDNQPGVAREIVTLNAGTALYAANIAESIADGIQLAREAIASGKARAKVDELVRFTQQFKR.

5-phospho-alpha-D-ribose 1-diphosphate contacts are provided by residues Gly84, 87 to 88 (GD), Thr92, 94 to 97 (NIST), 112 to 120 (KHGNRGVSS), and Ser124. Gly84 serves as a coordination point for anthranilate. Ser96 is a Mg(2+) binding site. Residue Asn115 coordinates anthranilate. Arg170 provides a ligand contact to anthranilate. Residues Asp229 and Glu230 each contribute to the Mg(2+) site.

Belongs to the anthranilate phosphoribosyltransferase family. As to quaternary structure, homodimer. Mg(2+) serves as cofactor.

It carries out the reaction N-(5-phospho-beta-D-ribosyl)anthranilate + diphosphate = 5-phospho-alpha-D-ribose 1-diphosphate + anthranilate. It functions in the pathway amino-acid biosynthesis; L-tryptophan biosynthesis; L-tryptophan from chorismate: step 2/5. Catalyzes the transfer of the phosphoribosyl group of 5-phosphorylribose-1-pyrophosphate (PRPP) to anthranilate to yield N-(5'-phosphoribosyl)-anthranilate (PRA). This chain is Anthranilate phosphoribosyltransferase, found in Burkholderia ambifaria (strain MC40-6).